Reading from the N-terminus, the 265-residue chain is Di-trans,poly-cis-undecaprenyl-diphosphate synthase (265 aa).

The RXG motif; crucial for prenyltransferase activity motif lies at 236–238; the sequence is RFG.

Belongs to the UPP synthase family. It depends on Mg(2+) as a cofactor.

It catalyses the reaction 8 isopentenyl diphosphate + (2E,6E)-farnesyl diphosphate = di-trans,octa-cis-undecaprenyl diphosphate + 8 diphosphate. Its pathway is protein modification; protein glycosylation. The protein operates within lipid metabolism. Its function is as follows. Cis-prenyl transferase involved in the synthesis of dolichol, a long-chain polyprenol that is utilized as a sugar carrier in protein glycosylation in the endoplasmic reticulum (ER). Catalyzes the sequential condensation of isopentenyl pyrophosphate (IPP) with farnesyl pyrophosphate (FPP) to produce a polyprenyl pyrophosphate which contains 11 (major) and 12 (minor) isoprene units. This is Di-trans,poly-cis-undecaprenyl-diphosphate synthase from Giardia intestinalis (strain ATCC 50803 / WB clone C6) (Giardia lamblia).